Reading from the N-terminus, the 372-residue chain is Glutamate 5-kinase (372 aa).

Position 14 (K14) interacts with ATP. Substrate is bound by residues S54, D141, and N153. ATP-binding positions include 173-174 (TD) and 215-221 (TGGMSTK). The PUA domain occupies 280 to 358 (QGSLVLDAGA…DEIESVLGYD (79 aa)).

This sequence belongs to the glutamate 5-kinase family.

The protein resides in the cytoplasm. It catalyses the reaction L-glutamate + ATP = L-glutamyl 5-phosphate + ADP. The protein operates within amino-acid biosynthesis; L-proline biosynthesis; L-glutamate 5-semialdehyde from L-glutamate: step 1/2. In terms of biological role, catalyzes the transfer of a phosphate group to glutamate to form L-glutamate 5-phosphate. The chain is Glutamate 5-kinase from Shewanella oneidensis (strain ATCC 700550 / JCM 31522 / CIP 106686 / LMG 19005 / NCIMB 14063 / MR-1).